The sequence spans 90 residues: Small ribosomal subunit protein uS15c (90 aa).

The protein belongs to the universal ribosomal protein uS15 family. As to quaternary structure, part of the 30S ribosomal subunit.

The protein localises to the plastid. It localises to the chloroplast. The protein is Small ribosomal subunit protein uS15c (rps15) of Glycine max (Soybean).